Here is a 128-residue protein sequence, read N- to C-terminus: Probable 4-amino-4-deoxy-L-arabinose-phosphoundecaprenol flippase subunit ArnF (128 aa).

Residues Met1 to Cys2 lie on the Cytoplasmic side of the membrane. Residues Leu3–Ala23 traverse the membrane as a helical segment. The Periplasmic portion of the chain corresponds to Ala24–Asp35. The helical transmembrane segment at Phe36–Gly56 threads the bilayer. Over Tyr57–Ala76 the chain is Cytoplasmic. The helical transmembrane segment at Tyr77–Trp97 threads the bilayer. Residues Glu98–Thr100 lie on the Periplasmic side of the membrane. Residues Phe101–Leu121 form a helical membrane-spanning segment. Topologically, residues Pro122 to Tyr128 are cytoplasmic.

It belongs to the ArnF family. Heterodimer of ArnE and ArnF.

Its subcellular location is the cell inner membrane. It participates in bacterial outer membrane biogenesis; lipopolysaccharide biosynthesis. In terms of biological role, translocates 4-amino-4-deoxy-L-arabinose-phosphoundecaprenol (alpha-L-Ara4N-phosphoundecaprenol) from the cytoplasmic to the periplasmic side of the inner membrane. The sequence is that of Probable 4-amino-4-deoxy-L-arabinose-phosphoundecaprenol flippase subunit ArnF from Shigella flexneri.